The sequence spans 362 residues: Atypical chemokine receptor 3 (362 aa).

Over 1–47 (MDVHLFDYAEPGNYSDINWPCNSSDCIVVDTVQCPTMPNKNVLLYTL) the chain is Extracellular. N-linked (GlcNAc...) asparagine glycosylation is found at asparagine 13 and asparagine 22. Residues 48-68 (SFIYIFIFVIGMIANSVVVWV) traverse the membrane as a helical segment. Topologically, residues 69–81 (NIQAKTTGYDTHC) are cytoplasmic. Residues 82–102 (YILNLAIADLWVVITIPVWVV) form a helical membrane-spanning segment. The Extracellular segment spans residues 103-118 (SLVQHNQWPMGELTCK). An intrachain disulfide couples cysteine 117 to cysteine 196. Residues 119–139 (ITHLIFSINLFGSIFFLACMS) traverse the membrane as a helical segment. Residues 140-162 (VDRYLSITYFTGTSSYKKKMVRR) are Cytoplasmic-facing. Residues 163–183 (VVCILVWLLAFFVSLPDTYYL) traverse the membrane as a helical segment. The Extracellular segment spans residues 184–213 (KTVTSASNNETYCRSFYPEHSIKEWLIGME). The helical transmembrane segment at 214–234 (LVSVILGFAVPFTIIAIFYFL) threads the bilayer. Over 235-252 (LARAMSASGDQEKHSSRK) the chain is Cytoplasmic. Residues 253–273 (IIFSYVVVFLVCWLPYHFVVL) traverse the membrane as a helical segment. Residues 274-296 (LDIFSILHYIPFTCQLENVLFTA) are Extracellular-facing. Residues 297 to 319 (LHVTQCLSLVHCCVNPVLYSFIN) form a helical membrane-spanning segment. Over 320 to 362 (RNYRYELMKAFIFKYSAKTGLTKLIDASRVSETEYSALEQNTK) the chain is Cytoplasmic. The interval 324 to 362 (YELMKAFIFKYSAKTGLTKLIDASRVSETEYSALEQNTK) is C-terminal cytoplasmic tail. Serine 347, serine 350, and serine 355 each carry phosphoserine.

The protein belongs to the G-protein coupled receptor 1 family. Atypical chemokine receptor subfamily. Homodimer. Can form heterodimers with CXCR4; heterodimerization may regulate CXCR4 signaling activity. Interacts with ARRB1 and ARRB2. The Ser/Thr residues in the C-terminal cytoplasmic tail may be phosphorylated. In terms of processing, ubiquitinated at the Lys residues in its C-terminal cytoplasmic tail and is essential for correct trafficking from and to the cell membrane. Deubiquitinated by CXCL12-stimulation in a reversible manner. In terms of tissue distribution, not detected in blood, liver, lung and heart, but high expression detected in several tumor cell lines (at protein level). Expressed in heart, spleen, kidney, lung, ovary, brain, testis, astrocytes, neutrophils and B-lymphocytes.

It is found in the cell membrane. The protein localises to the early endosome. The protein resides in the recycling endosome. Atypical chemokine receptor that controls chemokine levels and localization via high-affinity chemokine binding that is uncoupled from classic ligand-driven signal transduction cascades, resulting instead in chemokine sequestration, degradation, or transcytosis. Also known as interceptor (internalizing receptor) or chemokine-scavenging receptor or chemokine decoy receptor. Acts as a receptor for chemokines CXCL11 and CXCL12/SDF1. Chemokine binding does not activate G-protein-mediated signal transduction but instead induces beta-arrestin recruitment, leading to ligand internalization and activation of MAPK signaling pathway. Required for regulation of CXCR4 protein levels in migrating interneurons, thereby adapting their chemokine responsiveness. In glioma cells, transduces signals via MEK/ERK pathway, mediating resistance to apoptosis. Promotes cell growth and survival. Not involved in cell migration, adhesion or proliferation of normal hematopoietic progenitors but activated by CXCL11 in malignant hemapoietic cells, leading to phosphorylation of ERK1/2 (MAPK3/MAPK1) and enhanced cell adhesion and migration. Plays a regulatory role in CXCR4-mediated activation of cell surface integrins by CXCL12. Required for heart valve development. Regulates axon guidance in the oculomotor system through the regulation of CXCL12 levels. The protein is Atypical chemokine receptor 3 of Mus musculus (Mouse).